The sequence spans 146 residues: Large ribosomal subunit protein bL17 (146 aa).

A compositionally biased stretch (low complexity) spans 124–134 (EASRATRAAAS). Residues 124-146 (EASRATRAAASKKAEEEAASEAE) form a disordered region.

This sequence belongs to the bacterial ribosomal protein bL17 family. Part of the 50S ribosomal subunit. Contacts protein L32.

The polypeptide is Large ribosomal subunit protein bL17 (Corynebacterium kroppenstedtii (strain DSM 44385 / JCM 11950 / CIP 105744 / CCUG 35717)).